The chain runs to 987 residues: Kinesin-like protein KIN-14G (987 aa).

Residues 44–163 form the Calponin-homology (CH) domain; the sequence is SLRRYEAAGW…CILALKSYSE (120 aa). The segment at 201-221 is disordered; that stretch reads ISRTQSTDMLSTDQPLSSDGD. Residues 394–721 enclose the Kinesin motor domain; sequence NIRVYCRVRP…LKFAERVGSV (328 aa). 478–485 is an ATP binding site; the sequence is GQTGSGKT. Positions 725-754 form a coiled coil; that stretch reads AARVNKDNSEVKELKEQIANLKMALVRKGN. 2 disordered regions span residues 759 to 849 and 927 to 987; these read QPTA…ESKS and NIQN…SLGT. Positions 788 to 797 are enriched in polar residues; sequence MGNTSNNSRP. Residues 840-849 show a composition bias toward basic and acidic residues; that stretch reads GKDEDRESKS. Residues 964–974 show a composition bias toward polar residues; the sequence is PPNTVNSQPQR.

It belongs to the TRAFAC class myosin-kinesin ATPase superfamily. Kinesin family. KIN-14 subfamily. In terms of assembly, monomer. As to expression, flower specific.

The protein localises to the cytoplasm. It is found in the cytoskeleton. In terms of biological role, microtubule-binding motor protein. The protein is Kinesin-like protein KIN-14G of Arabidopsis thaliana (Mouse-ear cress).